The following is a 333-amino-acid chain: Probable malate dehydrogenase 3 (333 aa).

12–18 (GAAGQIA) contacts NAD(+). 2 residues coordinate substrate: Arg93 and Arg99. NAD(+) is bound by residues Asn106, Gln113, and 130-132 (VGN). 2 residues coordinate substrate: Asn132 and Arg163. The active-site Proton acceptor is the His188.

This sequence belongs to the LDH/MDH superfamily. MDH type 2 family. In terms of assembly, homodimer.

It carries out the reaction (S)-malate + NAD(+) = oxaloacetate + NADH + H(+). Functionally, catalyzes the reversible oxidation of malate to oxaloacetate. The protein is Probable malate dehydrogenase 3 (mdhC) of Dictyostelium discoideum (Social amoeba).